Consider the following 419-residue polypeptide: 3-isopropylmalate dehydratase large subunit (419 aa).

The [4Fe-4S] cluster site is built by C300, C360, and C363.

Belongs to the aconitase/IPM isomerase family. LeuC type 2 subfamily. As to quaternary structure, heterodimer of LeuC and LeuD. The cofactor is [4Fe-4S] cluster.

It catalyses the reaction (2R,3S)-3-isopropylmalate = (2S)-2-isopropylmalate. It participates in amino-acid biosynthesis; L-leucine biosynthesis; L-leucine from 3-methyl-2-oxobutanoate: step 2/4. Its function is as follows. Catalyzes the isomerization between 2-isopropylmalate and 3-isopropylmalate, via the formation of 2-isopropylmaleate. The chain is 3-isopropylmalate dehydratase large subunit from Nitratidesulfovibrio vulgaris (strain ATCC 29579 / DSM 644 / CCUG 34227 / NCIMB 8303 / VKM B-1760 / Hildenborough) (Desulfovibrio vulgaris).